We begin with the raw amino-acid sequence, 254 residues long: 5-oxoprolinase subunit A (254 aa).

The protein belongs to the LamB/PxpA family. Forms a complex composed of PxpA, PxpB and PxpC.

The catalysed reaction is 5-oxo-L-proline + ATP + 2 H2O = L-glutamate + ADP + phosphate + H(+). In terms of biological role, catalyzes the cleavage of 5-oxoproline to form L-glutamate coupled to the hydrolysis of ATP to ADP and inorganic phosphate. This chain is 5-oxoprolinase subunit A, found in Burkholderia lata (strain ATCC 17760 / DSM 23089 / LMG 22485 / NCIMB 9086 / R18194 / 383).